The primary structure comprises 184 residues: Major fimbrial subunit (184 aa).

Residues 1–22 (MKLSKIALAAALVFGINSVATA) form the signal peptide. Cysteine 49 and cysteine 88 are joined by a disulfide.

Belongs to the fimbrial protein family.

It is found in the fimbrium. Major structural component of PMF fimbriae. This is Major fimbrial subunit (pmfA) from Proteus mirabilis (strain HI4320).